A 183-amino-acid chain; its full sequence is Transmembrane protein 154 (183 aa).

An N-terminal signal peptide occupies residues Met1 to Gly22. Over Asn23–Glu75 the chain is Extracellular. The helical transmembrane segment at Phe76–Phe96 threads the bilayer. Residues Leu97–Ser183 lie on the Cytoplasmic side of the membrane. The segment at Glu163–Ser183 is disordered. Phosphoserine is present on Ser179.

It is found in the membrane. This is Transmembrane protein 154 (TMEM154) from Homo sapiens (Human).